The following is a 793-amino-acid chain: Protein translocase subunit SecA 2 (793 aa).

ATP contacts are provided by residues Gln-77, 95–99 (GEGKT), and Asp-493.

This sequence belongs to the SecA family. Monomer and homodimer (Potential). Part of the accessory SecA2/SecY2 protein translocation apparatus required to export cell wall protein GspB.

The protein localises to the cell membrane. It is found in the cytoplasm. It carries out the reaction ATP + H2O + cellular proteinSide 1 = ADP + phosphate + cellular proteinSide 2.. In terms of biological role, part of the accessory SecA2/SecY2 system specifically required to export GspB, a serine-rich repeat cell wall protein encoded upstream in the same operon. In Streptococcus gordonii, this protein is Protein translocase subunit SecA 2.